The sequence spans 193 residues: Cytochrome c biogenesis ATP-binding export protein CcmA (193 aa).

The 183-residue stretch at 9-191 folds into the ABC transporter domain; sequence LSASGLAILR…AAGFPVTAEV (183 aa). 41 to 48 is an ATP binding site; it reads GANGAGKT.

It belongs to the ABC transporter superfamily. CcmA exporter (TC 3.A.1.107) family. In terms of assembly, the complex is composed of two ATP-binding proteins (CcmA) and two transmembrane proteins (CcmB).

The protein resides in the cell inner membrane. The enzyme catalyses heme b(in) + ATP + H2O = heme b(out) + ADP + phosphate + H(+). In terms of biological role, part of the ABC transporter complex CcmAB involved in the biogenesis of c-type cytochromes; once thought to export heme, this seems not to be the case, but its exact role is uncertain. Responsible for energy coupling to the transport system. This chain is Cytochrome c biogenesis ATP-binding export protein CcmA, found in Hyphomonas neptunium (strain ATCC 15444).